The following is a 238-amino-acid chain: Probable transcriptional regulatory protein YeeN (238 aa).

It belongs to the TACO1 family. YeeN subfamily.

Its subcellular location is the cytoplasm. The protein is Probable transcriptional regulatory protein YeeN of Salmonella typhi.